The sequence spans 79 residues: uncharacterized protein (79 aa).

Residues 51 to 79 form a disordered region; it reads PAQFPKVQRPPTLLGGKNTSTQTTLHPVI. Positions 67–79 are enriched in polar residues; that stretch reads KNTSTQTTLHPVI.

This is an uncharacterized protein from Homo sapiens (Human).